Here is a 235-residue protein sequence, read N- to C-terminus: Thaumatin I (235 aa).

Positions Met-1 to Ala-22 are cleaved as a signal peptide. Cystine bridges form between Cys-31–Cys-226, Cys-78–Cys-88, Cys-93–Cys-99, Cys-143–Cys-215, Cys-148–Cys-199, Cys-156–Cys-167, Cys-171–Cys-180, and Cys-181–Cys-186. Positions Leu-230–Glu-235 are cleaved as a propeptide — removed in mature form.

Belongs to the thaumatin family.

The protein localises to the cytoplasmic vesicle. Taste-modifying protein; intensely sweet-tasting. It is 100000 times sweeter than sucrose on a molar basis. This is Thaumatin I from Thaumatococcus daniellii (Katemfe).